Consider the following 379-residue polypeptide: Epoxyqueuosine reductase (379 aa).

Asp-139 serves as the catalytic Proton donor. Residues 181-213 enclose the 4Fe-4S ferredoxin-type domain; the sequence is IPLPVDQPVEEGCGKCVACMTICPTGAIVEPYT. The [4Fe-4S] cluster site is built by Cys-193, Cys-196, Cys-199, Cys-203, Cys-219, Cys-246, Cys-249, and Cys-253.

The protein belongs to the QueG family. Monomer. It depends on cob(II)alamin as a cofactor. [4Fe-4S] cluster is required as a cofactor.

It is found in the cytoplasm. It carries out the reaction epoxyqueuosine(34) in tRNA + AH2 = queuosine(34) in tRNA + A + H2O. It participates in tRNA modification; tRNA-queuosine biosynthesis. Functionally, catalyzes the conversion of epoxyqueuosine (oQ) to queuosine (Q), which is a hypermodified base found in the wobble positions of tRNA(Asp), tRNA(Asn), tRNA(His) and tRNA(Tyr). The chain is Epoxyqueuosine reductase from Shigella dysenteriae serotype 1 (strain Sd197).